A 397-amino-acid chain; its full sequence is Oxysterol-binding protein homolog C354.07c (397 aa).

N-linked (GlcNAc...) asparagine glycosylation is found at Asn186 and Asn195.

Belongs to the OSBP family.

It is found in the endoplasmic reticulum. This chain is Oxysterol-binding protein homolog C354.07c, found in Schizosaccharomyces pombe (strain 972 / ATCC 24843) (Fission yeast).